We begin with the raw amino-acid sequence, 376 residues long: Glutamate 5-kinase (376 aa).

Lys23 provides a ligand contact to ATP. Substrate-binding residues include Ser63, Asp150, and Asn162. Residues 182 to 183 and 222 to 228 contribute to the ATP site; these read SD and TGGMASK. The PUA domain maps to 284 to 358; that stretch reads GGALRIDAGA…GKQTAQLPEG (75 aa).

The protein belongs to the glutamate 5-kinase family.

Its subcellular location is the cytoplasm. The enzyme catalyses L-glutamate + ATP = L-glutamyl 5-phosphate + ADP. Its pathway is amino-acid biosynthesis; L-proline biosynthesis; L-glutamate 5-semialdehyde from L-glutamate: step 1/2. Its function is as follows. Catalyzes the transfer of a phosphate group to glutamate to form L-glutamate 5-phosphate. The polypeptide is Glutamate 5-kinase (Corynebacterium diphtheriae (strain ATCC 700971 / NCTC 13129 / Biotype gravis)).